A 69-amino-acid chain; its full sequence is Small ribosomal subunit protein bS21 (69 aa).

The protein belongs to the bacterial ribosomal protein bS21 family.

The chain is Small ribosomal subunit protein bS21 from Borrelia duttonii (strain Ly).